Reading from the N-terminus, the 98-residue chain is Protein S100-A13 (98 aa).

Residues Ser-18–Val-53 enclose the EF-hand domain. Ca(2+) contacts are provided by Ser-32, Glu-37, Asp-64, Asn-66, Asp-68, Glu-70, and Glu-75. Ser-32 bears the Phosphoserine mark.

Belongs to the S-100 family. Homodimer. Part of a copper-dependent multiprotein complex containing S100A13, FGF1 and SYT1. Interacts with FGF1 and SYT1. Interacts with IL1A.

Its subcellular location is the cytoplasm. It localises to the secreted. Functionally, plays a role in the export of proteins that lack a signal peptide and are secreted by an alternative pathway. Binds two calcium ions per subunit. Binds one copper ion. Binding of one copper ion does not interfere with calcium binding. Required for the copper-dependent stress-induced export of IL1A and FGF1. The calcium-free protein binds to lipid vesicles containing phosphatidylserine, but not to vesicles containing phosphatidylcholine. The chain is Protein S100-A13 (S100a13) from Mus musculus (Mouse).